We begin with the raw amino-acid sequence, 92 residues long: Small ribosomal subunit protein uS19 (92 aa).

The protein belongs to the universal ribosomal protein uS19 family.

Functionally, protein S19 forms a complex with S13 that binds strongly to the 16S ribosomal RNA. The polypeptide is Small ribosomal subunit protein uS19 (Hyphomonas neptunium (strain ATCC 15444)).